Here is a 1615-residue protein sequence, read N- to C-terminus: Regulating synaptic membrane exocytosis protein 1 (1615 aa).

The disordered stretch occupies residues methionine 1–serine 26. The span at glycine 9–glutamine 20 shows a compositional bias: pro residues. Residues leucine 22–serine 205 enclose the RabBD domain. The segment at lysine 133–glutamate 193 adopts an FYVE-type zinc-finger fold. Cysteine 139, cysteine 142, cysteine 155, cysteine 158, cysteine 163, cysteine 166, cysteine 185, and cysteine 188 together coordinate Zn(2+). The disordered stretch occupies residues serine 205–serine 569. Positions glycine 206–glycine 222 are enriched in polar residues. Residues valine 227 to arginine 240 show a composition bias toward basic and acidic residues. Positions serine 241–alanine 256 are enriched in polar residues. The segment covering alanine 327–serine 379 has biased composition (basic and acidic residues). The segment covering methionine 399–arginine 410 has biased composition (basic residues). The span at glutamate 421–threonine 459 shows a compositional bias: low complexity. The span at glutamate 460–proline 475 shows a compositional bias: pro residues. Residues proline 476–arginine 489 show a composition bias toward basic and acidic residues. The span at arginine 511 to valine 523 shows a compositional bias: polar residues. Serine 514 is subject to Phosphoserine. A compositionally biased stretch (basic residues) spans lysine 529 to glutamine 541. A compositionally biased stretch (acidic residues) spans serine 559–serine 569. Position 592 is a phosphoserine (serine 592). Residues arginine 619 to arginine 705 form the PDZ domain. Residues arginine 712–proline 746 form a disordered region. Residues proline 714–serine 730 are compositionally biased toward low complexity. Serine 742 and serine 745 each carry phosphoserine. The region spanning leucine 756–tyrosine 879 is the C2 1 domain. The disordered stretch occupies residues histidine 884–serine 1201. Serine 895 carries the phosphoserine modification. Polar residues predominate over residues alanine 949–glutamine 958. At serine 991 the chain carries Phosphoserine. The segment covering arginine 1006–glutamate 1023 has biased composition (basic and acidic residues). A Phosphoserine modification is found at serine 1045. Residues serine 1078–serine 1092 show a composition bias toward basic and acidic residues. Residues glutamine 1173–glycine 1187 show a composition bias toward polar residues. Serine 1175 is modified (phosphoserine). At threonine 1177 the chain carries Phosphothreonine. Residues serine 1179, serine 1231, serine 1233, serine 1234, serine 1262, serine 1263, and serine 1265 each carry the phosphoserine modification. A disordered region spans residues aspartate 1256–threonine 1313. The segment covering serine 1268–serine 1289 has biased composition (low complexity). At serine 1339 the chain carries Phosphoserine. Residues arginine 1368–methionine 1397 form a disordered region. Positions alanine 1461–tyrosine 1579 constitute a C2 2 domain. Residues serine 1600, serine 1603, serine 1606, and serine 1615 each carry the phosphoserine modification.

In terms of assembly, interacts with RAB3C, RAB10, RAB26 and RAB37. Binds SNAP25, SYT1 and CACNA1B. Interaction with SYT1 is enhanced by calcium ions. Interaction with SNAP25 is weaker in the presence of calcium ions. Binds RAB3A, RAB3B and RAB3D that have been activated by GTP-binding. Binds UNC13A. Interacts with TSPOAP1 and RIMBP2. Interacts with PPFIA3 and PPFIA4. Interacts with ERC1. Post-translationally, phosphorylated by BRSK1. In terms of tissue distribution, highly expressed in hippocampus, brain cortex, cerebellum and olfactory bulb. Detected at lower levels in midbrain, hindbrain and spinal cord. Detected retina and in spinal cord motor neurons.

It localises to the cell membrane. The protein localises to the synapse. Its subcellular location is the presynaptic cell membrane. In terms of biological role, rab effector involved in exocytosis. May act as scaffold protein that regulates neurotransmitter release at the active zone. Essential for maintaining normal probability of neurotransmitter release and for regulating release during short-term synaptic plasticity. Plays a role in dendrite formation by melanocytes. In Rattus norvegicus (Rat), this protein is Regulating synaptic membrane exocytosis protein 1 (Rims1).